Consider the following 353-residue polypeptide: B1 bradykinin receptor (353 aa).

Residues 1 to 40 (MASSWPPLELQSSNQSQLFPQNATACDNAPEAWDLLHRVL) lie on the Extracellular side of the membrane. N-linked (GlcNAc...) asparagine glycans are attached at residues asparagine 14 and asparagine 22. A helical membrane pass occupies residues 41–64 (PTFIISICFFGLLGNLFVLLVFLL). Topologically, residues 65–73 (PRRQLNVAE) are cytoplasmic. The helical transmembrane segment at 74–98 (IYLANLAASDLVFVLGLPFWAENIW) threads the bilayer. Topologically, residues 99-111 (NQFNWPFGALLCR) are extracellular. Residues cysteine 110 and cysteine 189 are joined by a disulfide bond. A helical membrane pass occupies residues 112–133 (VINGVIKANLFISIFLVVAISQ). Residues 134 to 155 (DRYRVLVHPMASRRQQRRRQAR) are Cytoplasmic-facing. The chain crosses the membrane as a helical span at residues 156-178 (VTCVLIWVVGGLLSIPTFLLRSI). The Extracellular segment spans residues 179-199 (QAVPDLNITACILLLPHEAWH). Asparagine 185 carries N-linked (GlcNAc...) asparagine glycosylation. Residues 200–226 (FARIVELNILGFLLPLAAIVFFNYHIL) traverse the membrane as a helical segment. Topologically, residues 227–247 (ASLRTREEVSRTRCGGRKDSK) are cytoplasmic. Residues 248 to 272 (TTALILTLVVAFLVCWAPYHFFAFL) traverse the membrane as a helical segment. Topologically, residues 273–291 (EFLFQVQAVRGCFWEDFID) are extracellular. Residues 292 to 314 (LGLQLANFFAFTNSSLNPVIYVF) form a helical membrane-spanning segment. The Cytoplasmic segment spans residues 315-353 (VGRLFRTKVWELYKQCTPKSLAPISSSHRKEIFQLFWRN). Cysteine 330 carries S-palmitoyl cysteine lipidation.

It belongs to the G-protein coupled receptor 1 family. Bradykinin receptor subfamily. BDKRB1 sub-subfamily.

The protein resides in the cell membrane. This is a receptor for bradykinin. Could be a factor in chronic pain and inflammation. The protein is B1 bradykinin receptor (BDKRB1) of Homo sapiens (Human).